We begin with the raw amino-acid sequence, 420 residues long: MVSRQEQFEQVQAVKKSINTASEEVKNQALLAMADHLVAATEEILAANALDMAAAKGKISDVMLDRLYLDADRIEAMARGIREVVALPDPIGEVLETSQLENGLVITKKRVAMGVIGIIYESRPNVTSDAAALTLKSGNAVVLRSGKDAYQTTHAIVTALKKGLETTTIHPNVIQLVEDTSRESSYAMMKAKGYLDLLIPRGGAGLINAVVENAIVPVIETGTGIVHVYVDKDADEDKALSIINNAKTSRPSVCNAMEVLLVHENKAASILPRLDQMLVADRKEAGLEPIQFRLDSKASQFVSGQAAQAQDFDTEFLDYILAVKVVSSLEEAVAHIESHSTHHSDAIVTENAEAAAYFTDQVDSAAVYVNASTRFTDGGQFGLGCEMGISTQKLHARGPMGLKELTSYKYVVAGDGQIRE.

The protein belongs to the gamma-glutamyl phosphate reductase family.

The protein resides in the cytoplasm. The enzyme catalyses L-glutamate 5-semialdehyde + phosphate + NADP(+) = L-glutamyl 5-phosphate + NADPH + H(+). It participates in amino-acid biosynthesis; L-proline biosynthesis; L-glutamate 5-semialdehyde from L-glutamate: step 2/2. In terms of biological role, catalyzes the NADPH-dependent reduction of L-glutamate 5-phosphate into L-glutamate 5-semialdehyde and phosphate. The product spontaneously undergoes cyclization to form 1-pyrroline-5-carboxylate. The sequence is that of Gamma-glutamyl phosphate reductase from Streptococcus pneumoniae (strain ATCC 700669 / Spain 23F-1).